Consider the following 1213-residue polypeptide: DNA-directed RNA polymerase subunit beta' (1213 aa).

Zn(2+) contacts are provided by cysteine 60, cysteine 62, cysteine 75, and cysteine 78. Aspartate 450, aspartate 452, and aspartate 454 together coordinate Mg(2+). 4 residues coordinate Zn(2+): cysteine 819, cysteine 893, cysteine 900, and cysteine 903.

It belongs to the RNA polymerase beta' chain family. The RNAP catalytic core consists of 2 alpha, 1 beta, 1 beta' and 1 omega subunit. When a sigma factor is associated with the core the holoenzyme is formed, which can initiate transcription. Requires Mg(2+) as cofactor. Zn(2+) is required as a cofactor.

The catalysed reaction is RNA(n) + a ribonucleoside 5'-triphosphate = RNA(n+1) + diphosphate. DNA-dependent RNA polymerase catalyzes the transcription of DNA into RNA using the four ribonucleoside triphosphates as substrates. This is DNA-directed RNA polymerase subunit beta' from Streptococcus pyogenes serotype M2 (strain MGAS10270).